The following is a 72-amino-acid chain: Protein SlyX (72 aa).

It belongs to the SlyX family.

This Cronobacter sakazakii (strain ATCC BAA-894) (Enterobacter sakazakii) protein is Protein SlyX.